Reading from the N-terminus, the 667-residue chain is MDPSRSRSGGSGEESSFQENERRWQQERLHREEAYYQFINELSDEDYRLMRDHNLLGTPGEITSEELQQRLERAKEQLASQPGSDSAASDGDSESLRAHSDEDSLLRWLNTFRRTGNVTRSGQNGNQSWRAVSRTNPNSGEFGFSLEIHINPDNRGSEMHGEDSTDIPLSGVNREHRQQRPSSPVARRTRSQTSMSSSGPRGRRGARRQGSVQGSFATLGRLRNGIGVALGVPRVSAPRTNVINSHTNQSDGSTLRQGGRQRFGAAHIWENGARSNVTVRNTNQRLEPIRLRPAFSSRSRSPIQRQNGTVHHNSQRQGRPVQQTGRNRSVRHRGVTRVFLEQGREHRGTDYTPLSNSRLVSRITVEEGESSRSSAATQRHPAITLDLQVRRIRPGETRDRDSIANRTRSRAGLAESTVESTSGGFHRTISHLERSGVRTYVSTITVPLRRISENDVVEPSSVALRSILRQIMTGFGELSSLMEVEPASENQSNGQRLPEVYLELSNGDAADDSGQHGRASSQASQAQDGAEMLAVREPAPPQARPSGSRSRRQLGRADSVVEAGTLPILRLAHFFLLNEGDDDPIRGLTKEQIDNLSTRSYEQDGVDSELGKVCSVCISDYVAGNKLRQLPCLHEFHIHCIDRWLSENCTCPVCRRPVLEFGATSSG.

Disordered regions lie at residues 1–25 (MDPS…RRWQ), 75–100 (KEQL…RAHS), 116–216 (GNVT…QGSF), 295–355 (FSSR…TPLS), 396–419 (ETRD…STVE), 507–532 (GDAA…GAEM), and 537–556 (EPAP…QLGR). Low complexity predominate over residues 79–90 (ASQPGSDSAASD). A compositionally biased stretch (polar residues) spans 116-139 (GNVTRSGQNGNQSWRAVSRTNPNS). Residues 150–163 (INPDNRGSEMHGED) show a composition bias toward basic and acidic residues. Residues 191 to 200 (SQTSMSSSGP) are compositionally biased toward low complexity. The span at 296 to 327 (SSRSRSPIQRQNGTVHHNSQRQGRPVQQTGRN) shows a compositional bias: polar residues. Residues 516 to 530 (HGRASSQASQAQDGA) show a composition bias toward low complexity. Ser-559 bears the Phosphoserine mark. Residues 614-655 (CSVCISDYVAGNKLRQLPCLHEFHIHCIDRWLSENCTCPVCR) form an RING-type; atypical zinc finger.

This sequence belongs to the RNF12 family. As to expression, widely expressed with higher expression in the testis in both germ cells and Sertoli cells.

The protein localises to the nucleus. The protein resides in the cytoplasm. Its subcellular location is the cell projection. It is found in the axon. It localises to the PML body. It catalyses the reaction S-ubiquitinyl-[E2 ubiquitin-conjugating enzyme]-L-cysteine + [acceptor protein]-L-lysine = [E2 ubiquitin-conjugating enzyme]-L-cysteine + N(6)-ubiquitinyl-[acceptor protein]-L-lysine.. Its pathway is protein modification; protein ubiquitination. E3 ubiquitin-protein ligase mediating 'Lys-48'-linked polyubiquitination of LIMK1 and its subsequent targeting to the proteasome for degradation. Negatively regulates axonal outgrowth through regulation of the LIMK1 turnover. Mediates 'Lys-6' and 'Lys-27'-linked polyubiquitination of AR/androgen receptor thereby modulating its transcriptional activity. May also bind DNA and function as a transcriptional regulator. Mediates polyubiquitination of QKI in macrophages, leading to its degradation. The sequence is that of E3 ubiquitin-protein ligase RNF6 from Mus musculus (Mouse).